The primary structure comprises 155 residues: Chaperone protein IpgC (155 aa).

It belongs to the LcrH/SycD chaperone family.

The protein resides in the cytoplasm. Its function is as follows. Assists the correct folding of nascent IpaB. Once it is bound to IpaB, it binds to IpaC and impedes their premature association that would lead to their degradation in the absence of IpcG. This is Chaperone protein IpgC (ipgC) from Shigella dysenteriae.